The following is a 250-amino-acid chain: Glutathione transferase omega-1 (250 aa).

The GST N-terminal domain maps to 21 to 101; it reads SKGSFRVYNM…YLDDAFPETR (81 aa). Cysteine 33 functions as the Nucleophile in the catalytic mechanism. Glutathione contacts are provided by residues lysine 60 and 85 to 86; that span reads ES. A GST C-terminal domain is found at 106–234; that stretch reads DPYEKVQQKL…TQSLEHGAAF (129 aa).

This sequence belongs to the GST superfamily. Omega family. As to quaternary structure, homodimer. Expressed in the intestinal cells.

The protein resides in the cytoplasm. It catalyses the reaction RX + glutathione = an S-substituted glutathione + a halide anion + H(+). The catalysed reaction is L-dehydroascorbate + 2 glutathione = glutathione disulfide + L-ascorbate. The enzyme catalyses methylarsonate + 2 glutathione + H(+) = methylarsonous acid + glutathione disulfide + H2O. Functionally, exhibits glutathione-dependent thiol transferase activity. Has dehydroascorbate reductase activity and may contribute to the recycling of ascorbic acid. Participates in the biotransformation of inorganic arsenic and reduces monomethylarsonic acid (MMA). Protects against environmental stress and oxidative stress. This is Glutathione transferase omega-1 (gsto-1) from Caenorhabditis elegans.